Reading from the N-terminus, the 290-residue chain is 4-hydroxybenzoate octaprenyltransferase (290 aa).

8 consecutive transmembrane segments (helical) span residues 24–44 (IGFF…HKGI), 48–68 (VVLI…CIIN), 98–118 (LVAL…LNFI), 142–162 (FPQV…FTAI), 171–191 (WLLF…YAMI), 214–234 (FLIG…GWKE), 239–259 (VFYF…QILI), and 270–290 (AFLS…SSFH).

Belongs to the UbiA prenyltransferase family. The cofactor is Mg(2+).

It is found in the cell inner membrane. It catalyses the reaction all-trans-octaprenyl diphosphate + 4-hydroxybenzoate = 4-hydroxy-3-(all-trans-octaprenyl)benzoate + diphosphate. It participates in cofactor biosynthesis; ubiquinone biosynthesis. Functionally, catalyzes the prenylation of para-hydroxybenzoate (PHB) with an all-trans polyprenyl group. Mediates the second step in the final reaction sequence of ubiquinone-8 (UQ-8) biosynthesis, which is the condensation of the polyisoprenoid side chain with PHB, generating the first membrane-bound Q intermediate 3-octaprenyl-4-hydroxybenzoate. This is 4-hydroxybenzoate octaprenyltransferase from Blochmanniella pennsylvanica (strain BPEN).